The primary structure comprises 288 residues: Disulfide-bond oxidoreductase YghU (288 aa).

Residues asparagine 26, 52–54, glutamine 87, isoleucine 101, 117–118, glutamine 151, and arginine 178 each bind glutathione; these read TPN and ES. The region spanning 46–133 is the GST N-terminal domain; that stretch reads QLYSLGTPNG…YLAEKFGYFL (88 aa). A GST C-terminal domain is found at 139-265; the sequence is KRTETMNWLF…RIVNRTNGPL (127 aa). The interval 260–288 is disordered; that stretch reads RTNGPLNEQLHERHDASDFETNTEDKRQG. Over residues 268-288 the composition is skewed to basic and acidic residues; it reads QLHERHDASDFETNTEDKRQG.

It belongs to the GST superfamily. Nu-class GSH transferase family. In terms of assembly, homodimer.

Functionally, exhibits a robust glutathione (GSH)-dependent disulfide-bond reductase activity toward the model substrate, 2-hydroxyethyl disulfide; the actual physiological substrates are not known. Also displays a modest GSH-dependent peroxidase activity toward several organic hydroperoxides, such as cumene hydroperoxide and linoleic acid 13(S)-hydroperoxide, but does not reduce H(2)O(2) or tert-butyl hydroperoxide at appreciable rates. Exhibits little or no GSH transferase activity with most typical electrophilic substrates, and has no detectable transferase activity toward 1-chloro-2,4-dinitrobenzene (CDNB) with glutathionylspermidine (GspSH) as the nucleophilic substrate. This chain is Disulfide-bond oxidoreductase YghU (yghU), found in Escherichia coli (strain K12).